The sequence spans 1149 residues: Bone sialoprotein-binding protein (1149 aa).

The first 52 residues, 1-52 (MINRDNKKAITKKGMISNRLNKFSIRKYTVGTASILVGTTLIFGLGNQEAKA), serve as a signal peptide directing secretion. Positions 53-601 (AENTSTENAK…GDGTVKPEEK (549 aa)) are ligand binding A region. Disordered stretches follow at residues 54–249 (ENTS…TAPT) and 675–697 (LPTKENGTTDGEKDSNGSSVTVK). The segment covering 61 to 75 (AKQDEASASDNKEVV) has biased composition (basic and acidic residues). Polar residues predominate over residues 77–89 (ETENNSTQKNDLT). The segment covering 92–106 (IKKETNTDSHQEAKE) has biased composition (basic and acidic residues). The span at 109 to 126 (TTSSTQQQQNNATTSTET) shows a compositional bias: low complexity. Positions 130-145 (NIEKENVKPSTDKTAT) are enriched in basic and acidic residues. Residues 158 to 205 (PNNTNNDVTTKPSTSEIQTTPTTPQESTNIENSQPQPTPSKVDNQVTD) are compositionally biased toward polar residues. Residues 216-241 (SKEELKNNPEKLKELVRNDSNTDRST) are compositionally biased toward basic and acidic residues. CNA-B domains follow at residues 602–714 (LYKI…YKEP), 715–824 (KYNL…YKTP), and 825–935 (KYSL…EEDT). A disordered region spans residues 896–1124 (TQTGTNTTED…TGSENNGSNN (229 aa)). Composition is skewed to acidic residues over residues 903–913 (TEDDKDADGGE) and 930–1088 (YFEE…DSDS). The short motif at 1112-1116 (LPETG) is the LPXTG sorting signal element. Thr1115 bears the Pentaglycyl murein peptidoglycan amidated threonine mark. The propeptide at 1116–1149 (GSENNGSNNATLFGGLFAALGSLLLFGRRKKQNK) is removed by sortase.

The protein belongs to the serine-aspartate repeat-containing protein (SDr) family.

The protein localises to the secreted. The protein resides in the cell wall. Its function is as follows. Specifically interacts with bone sialoprotein (BSP), a glycoprotein of bone and dentin extracellular matrix. Could contribute to staphylococcal osteomyelitis and arthritis. The polypeptide is Bone sialoprotein-binding protein (bbp) (Staphylococcus aureus).